The primary structure comprises 173 residues: Translation initiation factor IF-3 (173 aa).

Belongs to the IF-3 family. In terms of assembly, monomer.

It localises to the cytoplasm. In terms of biological role, IF-3 binds to the 30S ribosomal subunit and shifts the equilibrium between 70S ribosomes and their 50S and 30S subunits in favor of the free subunits, thus enhancing the availability of 30S subunits on which protein synthesis initiation begins. This Methylorubrum extorquens (strain CM4 / NCIMB 13688) (Methylobacterium extorquens) protein is Translation initiation factor IF-3.